An 85-amino-acid polypeptide reads, in one-letter code: Large ribosomal subunit protein bL31B (85 aa).

It belongs to the bacterial ribosomal protein bL31 family. Type B subfamily. As to quaternary structure, part of the 50S ribosomal subunit.

This is Large ribosomal subunit protein bL31B from Macrococcus caseolyticus (strain JCSC5402) (Macrococcoides caseolyticum).